Reading from the N-terminus, the 492-residue chain is Prostaglandin E2 receptor EP4 subtype (492 aa).

The Extracellular portion of the chain corresponds to 1 to 19 (MSIPGTNASSSQASNPLNS). A glycan (N-linked (GlcNAc...) asparagine) is linked at asparagine 7. A helical membrane pass occupies residues 20-43 (PVTIPAVMFIFGVVGNLVAIVVLC). The Cytoplasmic segment spans residues 44-55 (KSRKEQKETTFY). A helical membrane pass occupies residues 56 to 79 (TLVCGLAVTDLLGTLLVSPVTIAT). Topologically, residues 80 to 96 (YLKGQWPGGHALCEYST) are extracellular. Cysteine 92 and cysteine 170 are disulfide-bonded. A helical transmembrane segment spans residues 97-115 (FILLFFGLSGLSIICAMSI). The Cytoplasmic segment spans residues 116–135 (ERYLAINHAYFYSHYVDKRL). The helical transmembrane segment at 136–160 (AGLTLFAVYASNVLFCALPSMGLGS) threads the bilayer. Residues 161 to 184 (SRLQYPATWCFIDWTTNVTAHAAF) lie on the Extracellular side of the membrane. Residues 185-211 (SYMYAGFSSFLILATVLCNVLVCGALL) traverse the membrane as a helical segment. Over 212-273 (RMHRQFMRRT…RSFRRIAGAE (62 aa)) the chain is Cytoplasmic. Residues 274–301 (IQMVILLIATSLVVLICSIPLVVRVFVN) traverse the membrane as a helical segment. Topologically, residues 302–318 (QLYRPQLEPVIGKNPDL) are extracellular. A helical membrane pass occupies residues 319 to 338 (QAIRIASVSPILDPWIYILL). Topologically, residues 339–492 (RKTVLSKAIE…ETLNLSEKCI (154 aa)) are cytoplasmic. A compositionally biased stretch (basic and acidic residues) spans 361-374 (RRERSGPHCSDSRR). The interval 361–383 (RRERSGPHCSDSRRTSSAVSGHS) is disordered. Serine 380, serine 383, serine 385, and serine 388 each carry phosphoserine.

It belongs to the G-protein coupled receptor 1 family. In terms of assembly, interacts with FEM1A. Post-translationally, phosphorylation mediates agonist-mediated desensitization by promoting cytoplasmic retention.

It is found in the cell membrane. In terms of biological role, receptor for prostaglandin E2 (PGE2). The activity of this receptor is mediated by G(s) proteins that stimulate adenylate cyclase. Has a relaxing effect on smooth muscle. May play an important role in regulating renal hemodynamics, intestinal epithelial transport, adrenal aldosterone secretion, and uterine function. The chain is Prostaglandin E2 receptor EP4 subtype (PTGER4) from Bos taurus (Bovine).